The following is a 181-amino-acid chain: uncharacterized protein (181 aa).

In terms of domain architecture, Macro spans 1–178 (MVVAYKLSNG…VFKKVFDNSL (178 aa)).

This is an uncharacterized protein from Sulfolobus acidocaldarius (strain ATCC 33909 / DSM 639 / JCM 8929 / NBRC 15157 / NCIMB 11770).